The sequence spans 1245 residues: Pesticidal crystal protein Cry5Ba (1245 aa).

A disordered region spans residues 1219 to 1245 (PLPTDDQSSDGNTTSNTNSNTSMNNNQ). Residues 1222–1245 (TDDQSSDGNTTSNTNSNTSMNNNQ) are compositionally biased toward low complexity.

This sequence belongs to the delta endotoxin family.

In terms of biological role, promotes colloidosmotic lysis by binding to the midgut epithelial cells of hymenopteran species. In Bacillus thuringiensis, this protein is Pesticidal crystal protein Cry5Ba (cry5Ba).